Here is a 362-residue protein sequence, read N- to C-terminus: Probable cinnamyl alcohol dehydrogenase 9 (362 aa).

Cys45 contacts Zn(2+). Residue Ser47 participates in NADP(+) binding. Zn(2+) contacts are provided by His67, Glu68, Cys98, Cys101, Cys104, Cys112, and Cys167. NADP(+) contacts are provided by residues Thr171, 192 to 197, 215 to 220, Thr255, Gly279, and 302 to 304; these read GLGGLG, STSPWK, and SMI.

Belongs to the zinc-containing alcohol dehydrogenase family. Homodimer. The cofactor is Zn(2+).

The catalysed reaction is (E)-cinnamyl alcohol + NADP(+) = (E)-cinnamaldehyde + NADPH + H(+). It carries out the reaction (E)-coniferol + NADP(+) = (E)-coniferaldehyde + NADPH + H(+). The enzyme catalyses (E)-sinapyl alcohol + NADP(+) = (E)-sinapaldehyde + NADPH + H(+). It catalyses the reaction (E)-4-coumaroyl alcohol + NADP(+) = (E)-4-coumaraldehyde + NADPH + H(+). The catalysed reaction is (E)-caffeyl alcohol + NADP(+) = (E)-caffeyl aldehyde + NADPH + H(+). The protein operates within aromatic compound metabolism; phenylpropanoid biosynthesis. Involved in lignin biosynthesis. Catalyzes the final step specific for the production of lignin monomers. Catalyzes the NADPH-dependent reduction of coniferaldehyde, 5-hydroxyconiferaldehyde, sinapaldehyde, 4-coumaraldehyde and caffeyl aldehyde to their respective alcohols. The sequence is that of Probable cinnamyl alcohol dehydrogenase 9 from Oryza sativa subsp. japonica (Rice).